Consider the following 254-residue polypeptide: tRNA (guanine-N(1)-)-methyltransferase (254 aa).

Residues glycine 119 and 139–144 (IGDFVL) each bind S-adenosyl-L-methionine.

This sequence belongs to the RNA methyltransferase TrmD family. As to quaternary structure, homodimer.

The protein localises to the cytoplasm. The catalysed reaction is guanosine(37) in tRNA + S-adenosyl-L-methionine = N(1)-methylguanosine(37) in tRNA + S-adenosyl-L-homocysteine + H(+). Specifically methylates guanosine-37 in various tRNAs. In Dechloromonas aromatica (strain RCB), this protein is tRNA (guanine-N(1)-)-methyltransferase.